Reading from the N-terminus, the 531-residue chain is GMP synthase [glutamine-hydrolyzing] (531 aa).

Residues 20–213 enclose the Glutamine amidotransferase type-1 domain; the sequence is KILIVDFGSQ…VRKVAGLKGD (194 aa). C97 acts as the Nucleophile in catalysis. Catalysis depends on residues H187 and E189. In terms of domain architecture, GMPS ATP-PPase spans 214–406; that stretch reads WTMRAFREEA…LGLPDVFVGR (193 aa). 241–247 lines the ATP pocket; it reads SGGVDSA.

In terms of assembly, homodimer.

The catalysed reaction is XMP + L-glutamine + ATP + H2O = GMP + L-glutamate + AMP + diphosphate + 2 H(+). It functions in the pathway purine metabolism; GMP biosynthesis; GMP from XMP (L-Gln route): step 1/1. Functionally, catalyzes the synthesis of GMP from XMP. The sequence is that of GMP synthase [glutamine-hydrolyzing] from Afipia carboxidovorans (strain ATCC 49405 / DSM 1227 / KCTC 32145 / OM5) (Oligotropha carboxidovorans).